A 190-amino-acid chain; its full sequence is Potassium-transporting ATPase KdpC subunit (190 aa).

A helical transmembrane segment spans residues 13-33; sequence LLLILTLITGILYPIVTTGFA.

It belongs to the KdpC family. The system is composed of three essential subunits: KdpA, KdpB and KdpC.

It localises to the cell inner membrane. Part of the high-affinity ATP-driven potassium transport (or Kdp) system, which catalyzes the hydrolysis of ATP coupled with the electrogenic transport of potassium into the cytoplasm. This subunit acts as a catalytic chaperone that increases the ATP-binding affinity of the ATP-hydrolyzing subunit KdpB by the formation of a transient KdpB/KdpC/ATP ternary complex. This is Potassium-transporting ATPase KdpC subunit from Leptospira interrogans serogroup Icterohaemorrhagiae serovar copenhageni (strain Fiocruz L1-130).